The sequence spans 333 residues: Glutamyl-tRNA reductase (333 aa).

Substrate contacts are provided by residues 60-63 (TCHR), serine 110, 115-117 (ETE), and glutamine 121. Cysteine 61 acts as the Nucleophile in catalysis. 189 to 194 (GYSEIN) is an NADP(+) binding site.

It belongs to the glutamyl-tRNA reductase family. As to quaternary structure, homodimer.

It catalyses the reaction (S)-4-amino-5-oxopentanoate + tRNA(Glu) + NADP(+) = L-glutamyl-tRNA(Glu) + NADPH + H(+). It participates in porphyrin-containing compound metabolism; protoporphyrin-IX biosynthesis; 5-aminolevulinate from L-glutamyl-tRNA(Glu): step 1/2. In terms of biological role, catalyzes the NADPH-dependent reduction of glutamyl-tRNA(Glu) to glutamate 1-semialdehyde (GSA). In Chlamydia muridarum (strain MoPn / Nigg), this protein is Glutamyl-tRNA reductase.